Here is a 1375-residue protein sequence, read N- to C-terminus: DNA-directed RNA polymerase subunit beta (1375 aa).

This sequence belongs to the RNA polymerase beta chain family. In terms of assembly, the RNAP catalytic core consists of 2 alpha, 1 beta, 1 beta' and 1 omega subunit. When a sigma factor is associated with the core the holoenzyme is formed, which can initiate transcription.

It catalyses the reaction RNA(n) + a ribonucleoside 5'-triphosphate = RNA(n+1) + diphosphate. DNA-dependent RNA polymerase catalyzes the transcription of DNA into RNA using the four ribonucleoside triphosphates as substrates. This is DNA-directed RNA polymerase subunit beta from Methylorubrum populi (strain ATCC BAA-705 / NCIMB 13946 / BJ001) (Methylobacterium populi).